A 459-amino-acid chain; its full sequence is SLIT-ROBO Rho GTPase-activating protein 2C (459 aa).

Residues 22–325 form the F-BAR domain; that stretch reads KEIRAQLTEQ…AVENLDATSD (304 aa). Over residues 181 to 202 the composition is skewed to basic and acidic residues; the sequence is LKEAEKQEEKQIGKSVKQEDRQ. The disordered stretch occupies residues 181–211; that stretch reads LKEAEKQEEKQIGKSVKQEDRQTPCSPDSTA. Residues 363–401 adopt a coiled-coil conformation; that stretch reads QSELVQRCQQLQSRLSTLKIENEEVKKTMEATLQTIQDI.

Homodimer. Interacts (via F-BAR domain) with SRGAP2/SRGAP2A (via F-BAR domain); formation of the heterodimer inhibits SRGAP2/SRGAP2A function. As to expression, ubiquitously expressed with higher expression in cerebellum. Probably expressed in fetal and adult neurons (at protein level).

Functionally, human-specific protein that acts as a key modifier of cortical connectivity in the human brain. Acts by inhibiting the functions of ancestral paralog SRGAP2/SRGAP2A, a postsynaptic protein that regulates excitatory and inhibitory synapse maturation and density in cortical pyramidal neurons. SRGAP2C is unstable but is able to heterodimerize with SRGAP2/SRGAP2A, thereby reducing SRGAP2/SRGAP2A levels through proteasome-dependent degradation. Inhibition of SRGAP2/SRGAP2A by SRGAP2C leads to an increase in synaptic density and protracted synaptic maturation of both excitatory and inhibitory synapses. Modifies cortical circuit connectivity by increasing the number of local and long-range cortical inputs received by layer 2/3 pyramidal neurons. Also able to increase the probability of sensory-evoked responses by layer 2/3 pyramidal neurons. This is SLIT-ROBO Rho GTPase-activating protein 2C from Homo sapiens (Human).